The primary structure comprises 311 residues: Homeobox-leucine zipper protein HOX13 (311 aa).

The tract at residues 1-74 (MKRPTSSSRK…PSCGLGEKKR (74 aa)) is disordered. Residues 35–54 (DEAEMEEVDEEEEEEVDEDM) are compositionally biased toward acidic residues. A DNA-binding region (homeobox) is located at residues 69–128 (LGEKKRRLALEQVRALERSFDTDNKLDPDRKARIARDLGLQPRQVAVWFQNRRARWKTKQ). A leucine-zipper region spans residues 127 to 171 (KQLERDFAALRARHDALRADCDALRRDKDALAAEIRELREKLPTK).

The protein belongs to the HD-ZIP homeobox family. Class I subfamily. In terms of tissue distribution, expressed in seedlings, roots, stems, leaf sheaths and blades and panicles.

It is found in the nucleus. Its function is as follows. Probable transcription factor. In Oryza sativa subsp. japonica (Rice), this protein is Homeobox-leucine zipper protein HOX13 (HOX13).